A 218-amino-acid chain; its full sequence is Cytochrome c biogenesis ATP-binding export protein CcmA (218 aa).

The region spanning 2–217 is the ABC transporter domain; the sequence is LEAKNLTCIR…KSCLSACCAV (216 aa). 34-41 provides a ligand contact to ATP; sequence GPNGAGKT.

The protein belongs to the ABC transporter superfamily. CcmA exporter (TC 3.A.1.107) family. The complex is composed of two ATP-binding proteins (CcmA) and two transmembrane proteins (CcmB).

The protein resides in the cell inner membrane. The enzyme catalyses heme b(in) + ATP + H2O = heme b(out) + ADP + phosphate + H(+). In terms of biological role, part of the ABC transporter complex CcmAB involved in the biogenesis of c-type cytochromes; once thought to export heme, this seems not to be the case, but its exact role is uncertain. Responsible for energy coupling to the transport system. This chain is Cytochrome c biogenesis ATP-binding export protein CcmA, found in Yersinia pestis.